We begin with the raw amino-acid sequence, 485 residues long: UDP-N-acetylmuramate--L-alanine ligase (485 aa).

120 to 126 is an ATP binding site; the sequence is GSHGKTT.

Belongs to the MurCDEF family.

The protein localises to the cytoplasm. The catalysed reaction is UDP-N-acetyl-alpha-D-muramate + L-alanine + ATP = UDP-N-acetyl-alpha-D-muramoyl-L-alanine + ADP + phosphate + H(+). The protein operates within cell wall biogenesis; peptidoglycan biosynthesis. Functionally, cell wall formation. This Rickettsia africae (strain ESF-5) protein is UDP-N-acetylmuramate--L-alanine ligase.